We begin with the raw amino-acid sequence, 242 residues long: Host range factor p28 (242 aa).

The 111-residue stretch at Tyr21–Trp131 folds into the KilA-N domain. An RING-type zinc finger spans residues Cys173–Arg226.

It belongs to the orthopoxvirus OPG021 family.

It is found in the host cytoplasm. The catalysed reaction is S-ubiquitinyl-[E2 ubiquitin-conjugating enzyme]-L-cysteine + [acceptor protein]-L-lysine = [E2 ubiquitin-conjugating enzyme]-L-cysteine + N(6)-ubiquitinyl-[acceptor protein]-L-lysine.. RING-finger E3 ubiquitin ligase which catalyzes the formation of both 'Lys-48'- and 'Lys-63'-linked polyubiquitin chains. Plays an important role in virulence by acting as an anti-apoptotic factor. In Homo sapiens (Human), this protein is Host range factor p28 (OPG021).